Consider the following 126-residue polypeptide: MRLGMLDLRPIFRNSKLAQRVQVLRRQGQYLPDGTWQQESVLDTVLAIIHPTTPDDLQLLPEGERHHPSKKIMSQDQIDVGDVLLYQDTRWRITQLSNWSEYGYYRGIAVGHDGTAQPAAAAFVTT.

This is an uncharacterized protein from Xylella fastidiosa (strain 9a5c).